Reading from the N-terminus, the 371-residue chain is Ferrochelatase (371 aa).

Fe cation is bound by residues H218 and E299.

The protein belongs to the ferrochelatase family.

The protein resides in the cytoplasm. The catalysed reaction is heme b + 2 H(+) = protoporphyrin IX + Fe(2+). It participates in porphyrin-containing compound metabolism; protoheme biosynthesis; protoheme from protoporphyrin-IX: step 1/1. Its function is as follows. Catalyzes the ferrous insertion into protoporphyrin IX. In Ralstonia nicotianae (strain ATCC BAA-1114 / GMI1000) (Ralstonia solanacearum), this protein is Ferrochelatase.